The following is a 174-amino-acid chain: Co-chaperone protein HscB homolog (174 aa).

One can recognise a J domain in the interval 2–74 (NYFELFSLLP…IQRAEHLLTL (73 aa)).

The protein belongs to the HscB family. In terms of assembly, interacts with HscA and stimulates its ATPase activity.

Functionally, co-chaperone involved in the maturation of iron-sulfur cluster-containing proteins. Seems to help targeting proteins to be folded toward HscA. The chain is Co-chaperone protein HscB homolog from Shewanella halifaxensis (strain HAW-EB4).